The primary structure comprises 313 residues: WUSCHEL-related homeobox 5 (313 aa).

Positions 1 to 32 are disordered; that stretch reads METTTTTLGGGGGGRAGGFSDPPSPLSPPLSP. Positions 8–17 are enriched in gly residues; that stretch reads LGGGGGGRAG. Positions 22–31 are enriched in pro residues; it reads PPSPLSPPLS. The homeobox; WUS-type DNA-binding region spans 40 to 104; that stretch reads LANARWTPTK…NHKARQRQKQ (65 aa). Disordered stretches follow at residues 224–247 and 271–313; these read AAGR…GRET and CAAV…SGGR. Residues 271–301 show a composition bias toward low complexity; that stretch reads CAAVSPTTPSASASFSWESESSDSPSSEAPP.

It belongs to the WUS homeobox family.

It is found in the nucleus. Transcription factor which may be involved in developmental processes. This chain is WUSCHEL-related homeobox 5 (WOX5), found in Oryza sativa subsp. japonica (Rice).